We begin with the raw amino-acid sequence, 31 residues long: MESFAYVLILTFAIATLFFAIAFRDPPKIGK.

A helical transmembrane segment spans residues 3–23 (SFAYVLILTFAIATLFFAIAF).

The protein belongs to the PsbT family. As to quaternary structure, PSII is composed of 1 copy each of membrane proteins PsbA, PsbB, PsbC, PsbD, PsbE, PsbF, PsbH, PsbI, PsbJ, PsbK, PsbL, PsbM, PsbT, PsbX, PsbY, PsbZ, Psb30/Ycf12, peripheral proteins PsbO, CyanoQ (PsbQ), PsbU, PsbV and a large number of cofactors. It forms dimeric complexes.

It is found in the cellular thylakoid membrane. In terms of biological role, found at the monomer-monomer interface of the photosystem II (PS II) dimer, plays a role in assembly and dimerization of PSII. PSII is a light-driven water plastoquinone oxidoreductase, using light energy to abstract electrons from H(2)O, generating a proton gradient subsequently used for ATP formation. The protein is Photosystem II reaction center protein T of Synechococcus sp. (strain CC9902).